Consider the following 485-residue polypeptide: Protein DETOXIFICATION 8 (485 aa).

Residues 1 to 26 (MENGFSLVPKEEEEEEDYSNEKSEDQ) form a disordered region. 12 consecutive transmembrane segments (helical) span residues 41-61 (FMAAPMVAVAASQYLLQVISI), 74-94 (AVAIATSLTNVTGFSLIFGLA), 118-138 (YGSMLCLLLVCFPISLLWVFM), 159-179 (SIWLIPALFGYSVLQSMTRFF), 188-208 (LFLSSLGALFFHVPFSWLLVY), 212-232 (FGIVGAALSIGFSYWLNVGLL), 263-283 (LAIPTAMMTCLEWWSFELLIL), 297-317 (VLSICLTMSSLHYVIVNAIGA), 338-358 (AANSAIFLGMIDAAIVSISLY), 381-401 (ITPFLCLSIGVDSFLAVLSGV), 414-434 (ANIGSYYLVGIPVGSILCFVV), and 442-462 (WIGILVGSTLQTIVLALVTFF).

This sequence belongs to the multi antimicrobial extrusion (MATE) (TC 2.A.66.1) family.

The protein localises to the membrane. In Arabidopsis thaliana (Mouse-ear cress), this protein is Protein DETOXIFICATION 8.